The sequence spans 274 residues: 3',5'-cyclic adenosine monophosphate phosphodiesterase CpdA (274 aa).

Asp-21, His-23, Asp-63, Asn-93, His-163, His-202, and His-204 together coordinate Fe cation. AMP-binding positions include His-23, Asp-63, and 93–94 (NH). His-204 contributes to the AMP binding site.

It belongs to the cyclic nucleotide phosphodiesterase class-III family. It depends on Fe(2+) as a cofactor.

It catalyses the reaction 3',5'-cyclic AMP + H2O = AMP + H(+). Its function is as follows. Hydrolyzes cAMP to 5'-AMP. Plays an important regulatory role in modulating the intracellular concentration of cAMP, thereby influencing cAMP-dependent processes. May coordinate responses to nutritional stress, ensuring optimal competence development. This is 3',5'-cyclic adenosine monophosphate phosphodiesterase CpdA from Haemophilus influenzae (strain ATCC 51907 / DSM 11121 / KW20 / Rd).